Here is a 453-residue protein sequence, read N- to C-terminus: Odorant receptor 83a (453 aa).

The Cytoplasmic portion of the chain corresponds to 1-28 (MKSTFKEERIKDDSKRRDLFVFVRQTMC). Residues 29-49 (IAAMYPFGYYVNGSGVLAVLV) form a helical membrane-spanning segment. Residues 50–85 (RFCDLTYELFNYFVSVHIAGLYICTIYINYGQGDLD) are Extracellular-facing. Residues 86–106 (FFVNCLIQTIIYLWTIAMKLY) form a helical membrane-spanning segment. The Cytoplasmic portion of the chain corresponds to 107 to 148 (FRRFRPGLLNTILSNINDEYETRSAVGFSFVTMAGSYRMSKL). Residues 149–169 (WIKTYVYCCYIGTIFWLALPI) traverse the membrane as a helical segment. Residues 170-203 (AYRDRSLPLACWYPFDYTQPGVYEVVFLLQAMGQ) lie on the Extracellular side of the membrane. Residues 204 to 224 (IQVAASFASSSGLHMVLCVLI) traverse the membrane as a helical segment. The Cytoplasmic portion of the chain corresponds to 225–322 (SGQYDVLFCS…ALKKIESFYS (98 aa)). The chain crosses the membrane as a helical span at residues 323–343 (PIWFVKIGEVTFLMCLVAFVS). The Extracellular portion of the chain corresponds to 344 to 359 (TKSTAANSFMRMVSLG). Residues 360–380 (QYLLLVLYELFIICYFADIVF) traverse the membrane as a helical segment. At 381–408 (QNSQRCGEALWRSPWQRHLKDVRSDYMF) the chain is on the cytoplasmic side. Residues 409–429 (FMLNSRRQFQLTAGKISNLNV) form a helical membrane-spanning segment. Over 430 to 453 (DRFRGTITTAFSFLTLLQKMDARE) the chain is Extracellular.

It belongs to the insect chemoreceptor superfamily. Heteromeric odorant receptor channel (TC 1.A.69) family. Or2a subfamily. Interacts with Orco. Complexes exist early in the endomembrane system in olfactory sensory neurons (OSNs), coupling these complexes to the conserved ciliary trafficking pathway.

Its subcellular location is the cell membrane. Odorant receptor which mediates acceptance or avoidance behavior, depending on its substrates. The odorant receptor repertoire encodes a large collection of odor stimuli that vary widely in identity, intensity, and duration. May form a complex with Orco to form odorant-sensing units, providing sensitive and prolonged odorant signaling and calcium permeability. Involved in the behavioral responses to pentanol, ethyl acetate, and propyl acetate. The chain is Odorant receptor 83a (Or83a) from Drosophila melanogaster (Fruit fly).